Consider the following 165-residue polypeptide: 6,7-dimethyl-8-ribityllumazine synthase (165 aa).

Residues Phe-22, 56 to 58 (SME), and 80 to 82 (AVI) contribute to the 5-amino-6-(D-ribitylamino)uracil site. 85 to 86 (ET) provides a ligand contact to (2S)-2-hydroxy-3-oxobutyl phosphate. The active-site Proton donor is His-88. Phe-113 is a 5-amino-6-(D-ribitylamino)uracil binding site. Arg-127 is a (2S)-2-hydroxy-3-oxobutyl phosphate binding site.

It belongs to the DMRL synthase family.

The enzyme catalyses (2S)-2-hydroxy-3-oxobutyl phosphate + 5-amino-6-(D-ribitylamino)uracil = 6,7-dimethyl-8-(1-D-ribityl)lumazine + phosphate + 2 H2O + H(+). It participates in cofactor biosynthesis; riboflavin biosynthesis; riboflavin from 2-hydroxy-3-oxobutyl phosphate and 5-amino-6-(D-ribitylamino)uracil: step 1/2. Its function is as follows. Catalyzes the formation of 6,7-dimethyl-8-ribityllumazine by condensation of 5-amino-6-(D-ribitylamino)uracil with 3,4-dihydroxy-2-butanone 4-phosphate. This is the penultimate step in the biosynthesis of riboflavin. In Thermotoga sp. (strain RQ2), this protein is 6,7-dimethyl-8-ribityllumazine synthase.